A 197-amino-acid polypeptide reads, in one-letter code: Probable molybdenum cofactor guanylyltransferase (197 aa).

GTP contacts are provided by residues 12 to 14 (LAG), K24, D71, and D103. Mg(2+) is bound at residue D103.

The protein belongs to the MobA family. It depends on Mg(2+) as a cofactor.

The protein localises to the cytoplasm. It carries out the reaction Mo-molybdopterin + GTP + H(+) = Mo-molybdopterin guanine dinucleotide + diphosphate. Transfers a GMP moiety from GTP to Mo-molybdopterin (Mo-MPT) cofactor (Moco or molybdenum cofactor) to form Mo-molybdopterin guanine dinucleotide (Mo-MGD) cofactor. In Mycolicibacterium paratuberculosis (strain ATCC BAA-968 / K-10) (Mycobacterium paratuberculosis), this protein is Probable molybdenum cofactor guanylyltransferase.